The primary structure comprises 384 residues: GDP/UDP-N,N'-diacetylbacillosamine 2-epimerase (hydrolyzing) (384 aa).

Belongs to the UDP-N-acetylglucosamine 2-epimerase family.

The catalysed reaction is GDP-N,N'-diacetylbacillosamine + H2O = 2,4-diacetamido-2,4,6-trideoxy-alpha-D-mannopyranose + GDP + H(+). The enzyme catalyses UDP-N,N'-diacetylbacillosamine + H2O = 2,4-diacetamido-2,4,6-trideoxy-alpha-D-mannopyranose + UDP + H(+). Involved in biosynthesis of legionaminic acid (5,7-diamino-3,5,7,9-tetradeoxy-D-glycero-D-galacto-non-2-ulosonic acid)(Leg), a sialic acid-like derivative that is incorporated into flagellin via O-linkage to Ser/Thr. Catalyzes the conversion of GDP-N,N'-diacetylbacillosamine (Bac2Ac4Ac) into 2,4-diacetamido-2,4,6-trideoxymannose and GDP. It can also use UDP-N,N'-diacetylbacillosamine however it generates small quantities of 2,4-diacetamido-2,4,6-trideoxymannose. The protein is GDP/UDP-N,N'-diacetylbacillosamine 2-epimerase (hydrolyzing) (legG) of Campylobacter jejuni subsp. jejuni serotype O:2 (strain ATCC 700819 / NCTC 11168).